A 219-amino-acid polypeptide reads, in one-letter code: Ribose-5-phosphate isomerase A (219 aa).

Residues 28-31 (SGST), 81-84 (DGAD), and 94-97 (KGGG) contribute to the substrate site. The active-site Proton acceptor is Glu-103. Lys-121 provides a ligand contact to substrate.

Belongs to the ribose 5-phosphate isomerase family. In terms of assembly, homodimer.

It catalyses the reaction aldehydo-D-ribose 5-phosphate = D-ribulose 5-phosphate. Its pathway is carbohydrate degradation; pentose phosphate pathway; D-ribose 5-phosphate from D-ribulose 5-phosphate (non-oxidative stage): step 1/1. Its function is as follows. Catalyzes the reversible conversion of ribose-5-phosphate to ribulose 5-phosphate. This is Ribose-5-phosphate isomerase A from Haemophilus influenzae (strain ATCC 51907 / DSM 11121 / KW20 / Rd).